Here is a 260-residue protein sequence, read N- to C-terminus: 3'-5' ssDNA/RNA exonuclease TatD (260 aa).

A divalent metal cation-binding residues include E92, H128, and H153.

The protein belongs to the metallo-dependent hydrolases superfamily. TatD-type hydrolase family. TatD subfamily. Monomer. Requires Mg(2+) as cofactor.

The protein localises to the cytoplasm. 3'-5' exonuclease that prefers single-stranded DNA and RNA. May play a role in the H(2)O(2)-induced DNA damage repair. In Pantoea ananatis (strain LMG 20103), this protein is 3'-5' ssDNA/RNA exonuclease TatD.